The following is a 396-amino-acid chain: Digeranylgeranylglycerophospholipid reductase (396 aa).

Gly-14, Glu-33, Cys-44, Gly-45, Gly-47, Arg-100, Ala-124, Glu-162, Asp-283, Gly-295, and Ile-296 together coordinate FAD. Lys-338 and Val-374 together coordinate a 2,3-bis-O-(geranylgeranyl)-sn-glycerol 1-phospholipid.

It belongs to the geranylgeranyl reductase family. DGGGPL reductase subfamily. In terms of assembly, monomer. Requires FAD as cofactor.

It localises to the cell membrane. The catalysed reaction is 2,3-bis-O-(phytanyl)-sn-glycerol 1-phosphate + 8 NADP(+) = 2,3-bis-O-(geranylgeranyl)-sn-glycerol 1-phosphate + 8 NADPH + 8 H(+). The enzyme catalyses 2,3-bis-O-(phytanyl)-sn-glycerol 1-phosphate + 8 NAD(+) = 2,3-bis-O-(geranylgeranyl)-sn-glycerol 1-phosphate + 8 NADH + 8 H(+). It catalyses the reaction a 2,3-bis-O-phytanyl-sn-glycerol 1-phospholipid + 8 A = a 2,3-bis-O-(geranylgeranyl)-sn-glycerol 1-phospholipid + 8 AH2. It carries out the reaction CDP-2,3-bis-O-(geranylgeranyl)-sn-glycerol + 8 AH2 = CDP-2,3-bis-O-(phytanyl)-sn-glycerol + 8 A. The catalysed reaction is archaetidylserine + 8 AH2 = 2,3-bis-O-phytanyl-sn-glycero-3-phospho-L-serine + 8 A. Its pathway is membrane lipid metabolism; glycerophospholipid metabolism. Functionally, is involved in the reduction of 2,3-digeranylgeranylglycerophospholipids (unsaturated archaeols) into 2,3-diphytanylglycerophospholipids (saturated archaeols) in the biosynthesis of archaeal membrane lipids. Catalyzes the formation of archaetidic acid (2,3-di-O-phytanyl-sn-glyceryl phosphate) from 2,3-di-O-geranylgeranylglyceryl phosphate (DGGGP) via the hydrogenation of each double bond of the isoprenoid chains. Can use both NADH and NADPH as electron donors. Also catalyzes the reduction of 2,3-di-O-geranylgeranylglyceryl phosphate analogs such as 2,3-di-O-phytyl-sn-glyceryl phosphate (DPHGP), 3-O-(2,3-di-O-phytyl-sn-glycero-phospho)-sn-glycerol (DPHGPG) and 2,3-di-O-phytyl-sn-glycero-phosphoethanolamine (DPHGPE). Is not active toward 2,3-di-O-geranylgeranylglycerol. Is also probably able to reduce double bonds of geranyl groups in CDP-2,3-bis-O-(geranylgeranyl)-sn-glycerol and archaetidylserine, thus acting at various stages in the biosynthesis of archaeal membrane lipids. In Thermoplasma acidophilum (strain ATCC 25905 / DSM 1728 / JCM 9062 / NBRC 15155 / AMRC-C165), this protein is Digeranylgeranylglycerophospholipid reductase.